Consider the following 258-residue polypeptide: Tegument protein VP22 (258 aa).

The segment at 66-143 (VQPAARGRDR…RAPPGANAVA (78 aa)) is disordered. Residues 77–118 (AAAGTTVAAPAAAPARRSSSRASSRPPRAAADPPVLRPATRG) are compositionally biased toward low complexity. The Nuclear localization signal motif lies at 131–134 (PRPR). Positions 204 to 216 (LDRMLKSAAIRIL) match the Nuclear export signal motif. The tract at residues 234–258 (RAQRPAARGSTSGGESRLRGERARP) is disordered. The span at 249–258 (SRLRGERARP) shows a compositional bias: basic and acidic residues.

The protein belongs to the alphaherpesvirinae VP22 tegument protein family. In terms of assembly, interacts with gE (via C-terminus); this interaction is necessary for the recruitment of VP22 to the Golgi and its packaging into virions. Interacts with gM (via C-terminus). Interacts with VP16; this interaction allows the formation of a tripartite complex composed of VP16, VP22 and UL41/VHS. Interacts with the capsid-binding protein UL16. Interacts with host CGAS. In terms of processing, highly phosphorylated in the host cell. Packaging is selective for underphosphorylated forms.

It localises to the virion tegument. Its subcellular location is the host cytoplasm. It is found in the host nucleus. The protein resides in the host Golgi apparatus. Functionally, tegument protein that plays different roles during the time course of infection. Participates in both the accumulation of viral mRNAs and viral protein translation at late time of infection. Modulates the RNase activity of the virion host shutoff protein UL41 probably to ensure necessary levels of key cellular mRNAs and proteins. Plays a role in microtubule reorganization that occurs after viral infection by stabilizing microtubule network. Plays a role in the inhibition of host innate immune system by targeting the CGAS enzymatic activity which is the principal cytosolic DNA sensor that detects invading viral DNA. Acts by mediating disruption of liquid-like droplets in which CGAS is activated, thereby preventing CGAS activity. The sequence is that of Tegument protein VP22 from Bovine herpesvirus 1.1 (strain Cooper) (BoHV-1).